The following is a 247-amino-acid chain: Chaperone protein AfaB (247 aa).

Residues 1-29 form the signal peptide; sequence MKMRAVAVFTGMLTGVLSVAGLLSAGAYA.

It belongs to the periplasmic pilus chaperone family.

It is found in the periplasm. Involved in the biogenesis of the AFA-III afimbrial adhesin. This is Chaperone protein AfaB (afaB) from Escherichia coli.